An 85-amino-acid polypeptide reads, in one-letter code: Small ribosomal subunit protein eS21 (85 aa).

The protein belongs to the eukaryotic ribosomal protein eS21 family. As to quaternary structure, component of the 40S small ribosomal subunit.

The protein localises to the cytoplasm. It is found in the cytosol. Its subcellular location is the rough endoplasmic reticulum. This chain is Small ribosomal subunit protein eS21 (rps-21), found in Pectinaria gouldii (Trumpet worm).